We begin with the raw amino-acid sequence, 366 residues long: MQLLTLPPSPTLATSIRATAQVFEDPRSQALLAHLQQVAPSEASVLIIGETGTGKELVARHIHNLSGRRNGPFVAVNCGAFSESLVEAELFGHEKGAFTGALAAKAGWFEEANGGTLFLDEIGDLPLPIQVKLLRVLQEREVVRLGSRKSIPINVRVLAATNVQLEKAINAGHFREDLYYRLNVVTLQLHPLRDRPGDILPLARHFIRSYSDRLGYGPVELSAKAQAKLVEYSWPGNIRELENVIHHSLLTCGDGTVQAQDLRLSNLRIERQEEEPAGNGVEDLLQRAFSRLYEEQSGDLYEKVENALLRSAYRFCHYNQVHTAQLLGLSRNITRTRLIAIGELVVNKRRGQEQQVLDNRVVRLSI.

Residues Gln21–Leu250 form the Sigma-54 factor interaction domain. Residues Gly49–Glu56 and Ala112–Glu121 contribute to the ATP site.

Functionally, involved in the dimethyl sulfide degradation pathway. Activates the expression of sfnG and sfnF. This Pseudomonas putida (Arthrobacter siderocapsulatus) protein is Sigma54-dependent transcriptional activator SfnR.